The primary structure comprises 219 residues: Cytidylate kinase (219 aa).

21–29 (GPAASGKGT) contributes to the ATP binding site.

This sequence belongs to the cytidylate kinase family. Type 1 subfamily.

Its subcellular location is the cytoplasm. It carries out the reaction CMP + ATP = CDP + ADP. It catalyses the reaction dCMP + ATP = dCDP + ADP. This chain is Cytidylate kinase, found in Rickettsia conorii (strain ATCC VR-613 / Malish 7).